The chain runs to 116 residues: Protein RALF-like 33 (116 aa).

The first 23 residues, 1-23, serve as a signal peptide directing secretion; it reads MRGLSTKPVAIIIAILTVHFLFA. A propeptide spans 24–67 (removed in mature form); the sequence is AVTSQSSGDFVPIESKCNGTIAECSLSTAEEEFEMDSEINRRIL. N-linked (GlcNAc...) asparagine glycosylation is present at Asn-41. Intrachain disulfides connect Cys-85/Cys-95 and Cys-108/Cys-114.

The protein belongs to the plant rapid alkalinization factor (RALF) family. Proteolytically cleaved, probably by S1P, a subtilisin-like serine protease (subtilase). Expressed in roots, stems, leaves and plants.

It localises to the secreted. In terms of biological role, cell signaling peptide that may regulate plant stress, growth, and development. Mediates a rapid alkalinization of extracellular space by mediating a transient increase in the cytoplasmic Ca(2+) concentration leading to a calcium-dependent signaling events through a cell surface receptor and a concomitant activation of some intracellular mitogen-activated protein kinases. The chain is Protein RALF-like 33 (RALFL33) from Arabidopsis thaliana (Mouse-ear cress).